We begin with the raw amino-acid sequence, 191 residues long: Probable GTP-binding protein EngB (191 aa).

The EngB-type G domain maps to 13 to 189; sequence DRLEVAFAGR…RAEIVALLPD (177 aa). Residues 21–28, 48–52, 67–70, 134–137, and 168–170 contribute to the GTP site; these read GRSNVGKS, GRTRE, DLPG, TKTD, and TSS. Residues Ser28 and Thr50 each coordinate Mg(2+).

Belongs to the TRAFAC class TrmE-Era-EngA-EngB-Septin-like GTPase superfamily. EngB GTPase family. Mg(2+) serves as cofactor.

Its function is as follows. Necessary for normal cell division and for the maintenance of normal septation. This chain is Probable GTP-binding protein EngB, found in Maricaulis maris (strain MCS10) (Caulobacter maris).